Consider the following 219-residue polypeptide: MVKYFLGQSVLRSSWDQVFAAFWQRYPNPYSKHVLTEDIVHREVTPDQKLLSRRLLTKTNRMPRWAERLFPANVAHSVYVLEDSIVDPQNQTMTTFTWNINHARLMVVEERCVYCVNSDNSGWTEIRREAWVSSSLFGVSRAVQEFGLARFKSNVTKTMKGFEYILAKLQGEAPSKTLVETAKEAKEKAKETALAATEKAKDLASKAATKKQQQQQQFV.

Positions 36-174 (TEDIVHREVT…ILAKLQGEAP (139 aa)) constitute a PRELI/MSF1 domain.

As to quaternary structure, forms a complex with TRIAP1 in the mitochondrion intermembrane space. Interacts with OPA1 and AIFM1. Highly expressed in fetal liver; less expressed in fetal brain, lung, and kidney. At the adult stage, expression is drastically reduced in the liver but highly expressed in the spleen, brain, lung, lymph nodes and peripheral blood leukocytes.

It localises to the mitochondrion. The protein localises to the mitochondrion intermembrane space. The catalysed reaction is a 1,2-diacyl-sn-glycero-3-phosphate(in) = a 1,2-diacyl-sn-glycero-3-phosphate(out). Involved in the modulation of the mitochondrial apoptotic pathway by ensuring the accumulation of cardiolipin (CL) in mitochondrial membranes. In vitro, the TRIAP1:PRELID1 complex mediates the transfer of phosphatidic acid (PA) between liposomes and probably functions as a PA transporter across the mitochondrion intermembrane space to provide PA for CL synthesis in the inner membrane. Regulates the mitochondrial apoptotic pathway in primary Th cells. Regulates Th cell differentiation by down-regulating STAT6 thereby reducing IL-4-induced Th2 cell number. May be important for the development of vital and immunocompetent organs. The chain is PRELI domain-containing protein 1, mitochondrial (PRELID1) from Homo sapiens (Human).